The primary structure comprises 120 residues: Protein CcdB (120 aa).

Residues 3–118 form the Response regulatory domain; sequence RVLVVDDAKF…KVLEAVSRVM (116 aa). At aspartate 53 the chain carries 4-aspartylphosphate.

The polypeptide is Protein CcdB (ccdB) (Bacillus subtilis (strain 168)).